Here is a 142-residue protein sequence, read N- to C-terminus: FAD synthase (142 aa).

Residues 9-10 (TF), 14-17 (HPGH), and D92 each bind ATP.

This sequence belongs to the archaeal FAD synthase family. As to quaternary structure, homodimer. A divalent metal cation is required as a cofactor.

The catalysed reaction is FMN + ATP + H(+) = FAD + diphosphate. Its pathway is cofactor biosynthesis; FAD biosynthesis; FAD from FMN: step 1/1. Catalyzes the transfer of the AMP portion of ATP to flavin mononucleotide (FMN) to produce flavin adenine dinucleotide (FAD) coenzyme. The chain is FAD synthase from Methanohalophilus mahii (strain ATCC 35705 / DSM 5219 / SLP).